The primary structure comprises 129 residues: Small ribosomal subunit protein eS6 (129 aa).

This sequence belongs to the eukaryotic ribosomal protein eS6 family.

The polypeptide is Small ribosomal subunit protein eS6 (Archaeoglobus fulgidus (strain ATCC 49558 / DSM 4304 / JCM 9628 / NBRC 100126 / VC-16)).